Reading from the N-terminus, the 301-residue chain is Homoserine O-acetyltransferase (301 aa).

Catalysis depends on Cys-142, which acts as the Acyl-thioester intermediate. Substrate-binding residues include Lys-163 and Ser-192. His-235 serves as the catalytic Proton acceptor. The active site involves Glu-237. Arg-249 serves as a coordination point for substrate.

The protein belongs to the MetA family.

Its subcellular location is the cytoplasm. It catalyses the reaction L-homoserine + acetyl-CoA = O-acetyl-L-homoserine + CoA. It participates in amino-acid biosynthesis; L-methionine biosynthesis via de novo pathway; O-acetyl-L-homoserine from L-homoserine: step 1/1. Functionally, transfers an acetyl group from acetyl-CoA to L-homoserine, forming acetyl-L-homoserine. The polypeptide is Homoserine O-acetyltransferase (Bacillus cereus (strain ZK / E33L)).